Consider the following 149-residue polypeptide: Small ribosomal subunit protein uS13 (149 aa).

This sequence belongs to the universal ribosomal protein uS13 family. As to quaternary structure, part of the 30S ribosomal subunit. Forms a loose heterodimer with protein S19. Forms two bridges to the 50S subunit in the 70S ribosome.

Functionally, located at the top of the head of the 30S subunit, it contacts several helices of the 16S rRNA. In the 70S ribosome it contacts the 23S rRNA (bridge B1a) and protein L5 of the 50S subunit (bridge B1b), connecting the 2 subunits; these bridges are implicated in subunit movement. This is Small ribosomal subunit protein uS13 from Methanococcus maripaludis (strain DSM 14266 / JCM 13030 / NBRC 101832 / S2 / LL).